Consider the following 246-residue polypeptide: MQSCRTVAVIPARHASTRFPGKPLAIIAGRTMIEHVWRRCQEAQAFDEVWVATDDDRIRAAVEGFGGKAVMTSPACATGTDRVAEVALGRPDIDIWVNVQGDEPLVDPATLQRLAGLFQDASVRMGTLVRPLEADEAASPHVVKAVLALNGDALYFSRSLVPHVREPGTPVQRWGHIGLYGYRREVLLSLAKLAPTPLEDAEKLEQLRALEHGIPIRCAKVTSHTVAVDLPGDVEKVEALMRARGG.

The protein belongs to the KdsB family.

It localises to the cytoplasm. It carries out the reaction 3-deoxy-alpha-D-manno-oct-2-ulosonate + CTP = CMP-3-deoxy-beta-D-manno-octulosonate + diphosphate. Its pathway is nucleotide-sugar biosynthesis; CMP-3-deoxy-D-manno-octulosonate biosynthesis; CMP-3-deoxy-D-manno-octulosonate from 3-deoxy-D-manno-octulosonate and CTP: step 1/1. The protein operates within bacterial outer membrane biogenesis; lipopolysaccharide biosynthesis. Its function is as follows. Activates KDO (a required 8-carbon sugar) for incorporation into bacterial lipopolysaccharide in Gram-negative bacteria. The sequence is that of 3-deoxy-manno-octulosonate cytidylyltransferase from Myxococcus xanthus (strain DK1622).